The following is a 343-amino-acid chain: Fructose-1,6-bisphosphatase class 1 (343 aa).

Residues E90, D109, L111, and D112 each contribute to the Mg(2+) site. Residues 112–115 (DGSS) and N199 contribute to the substrate site. E271 provides a ligand contact to Mg(2+).

The protein belongs to the FBPase class 1 family. Homotetramer. Mg(2+) serves as cofactor.

Its subcellular location is the cytoplasm. The enzyme catalyses beta-D-fructose 1,6-bisphosphate + H2O = beta-D-fructose 6-phosphate + phosphate. It participates in carbohydrate biosynthesis; Calvin cycle. This is Fructose-1,6-bisphosphatase class 1 from Rhodopseudomonas palustris (strain HaA2).